The sequence spans 122 residues: UPF0102 protein VIBHAR_00890 (122 aa).

This sequence belongs to the UPF0102 family.

The polypeptide is UPF0102 protein VIBHAR_00890 (Vibrio campbellii (strain ATCC BAA-1116)).